The sequence spans 336 residues: ATP-dependent 6-phosphofructokinase (336 aa).

An ATP-binding site is contributed by Gly-11. 21–25 (RAVVR) contributes to the ADP binding site. ATP-binding positions include 72–73 (RY) and 102–105 (GDGS). Asp-103 serves as a coordination point for Mg(2+). 125–127 (TID) is a substrate binding site. Asp-127 acts as the Proton acceptor in catalysis. Position 154 (Arg-154) interacts with ADP. Substrate contacts are provided by residues Arg-162 and 169 to 171 (MGR). ADP is bound by residues 185–187 (GAD), Lys-211, and 213–215 (KKH). Substrate-binding positions include Glu-222, Arg-244, and 250 to 253 (HIQR).

Belongs to the phosphofructokinase type A (PFKA) family. ATP-dependent PFK group I subfamily. Prokaryotic clade 'B1' sub-subfamily. As to quaternary structure, homotetramer. It depends on Mg(2+) as a cofactor.

It is found in the cytoplasm. It catalyses the reaction beta-D-fructose 6-phosphate + ATP = beta-D-fructose 1,6-bisphosphate + ADP + H(+). It participates in carbohydrate degradation; glycolysis; D-glyceraldehyde 3-phosphate and glycerone phosphate from D-glucose: step 3/4. With respect to regulation, allosterically activated by ADP and other diphosphonucleosides, and allosterically inhibited by phosphoenolpyruvate. Catalyzes the phosphorylation of D-fructose 6-phosphate to fructose 1,6-bisphosphate by ATP, the first committing step of glycolysis. In Streptococcus suis (strain 05ZYH33), this protein is ATP-dependent 6-phosphofructokinase.